The sequence spans 526 residues: Bifunctional purine biosynthesis protein PurH (526 aa).

Positions 1-145 constitute an MGS-like domain; sequence MIRTALLSVS…KNHQDVTVLI (145 aa).

It belongs to the PurH family.

The enzyme catalyses (6R)-10-formyltetrahydrofolate + 5-amino-1-(5-phospho-beta-D-ribosyl)imidazole-4-carboxamide = 5-formamido-1-(5-phospho-D-ribosyl)imidazole-4-carboxamide + (6S)-5,6,7,8-tetrahydrofolate. It catalyses the reaction IMP + H2O = 5-formamido-1-(5-phospho-D-ribosyl)imidazole-4-carboxamide. The protein operates within purine metabolism; IMP biosynthesis via de novo pathway; 5-formamido-1-(5-phospho-D-ribosyl)imidazole-4-carboxamide from 5-amino-1-(5-phospho-D-ribosyl)imidazole-4-carboxamide (10-formyl THF route): step 1/1. It participates in purine metabolism; IMP biosynthesis via de novo pathway; IMP from 5-formamido-1-(5-phospho-D-ribosyl)imidazole-4-carboxamide: step 1/1. The polypeptide is Bifunctional purine biosynthesis protein PurH (Polynucleobacter necessarius subsp. necessarius (strain STIR1)).